The following is a 472-amino-acid chain: Collagenase 3 (472 aa).

Positions 1–19 are cleaved as a signal peptide; it reads MHPGVLAAFLFLSWTRCWS. The propeptide at 20 to 104 is activation peptide; that stretch reads LPVPNDDDDD…PRCGVPDVGE (85 aa). The Cysteine switch signature appears at 95-102; it reads PRCGVPDV. A Zn(2+)-binding site is contributed by cysteine 97. N-linked (GlcNAc...) asparagine glycosylation occurs at asparagine 118. A Ca(2+)-binding site is contributed by aspartate 129. Asparagine 153 and asparagine 159 each carry an N-linked (GlcNAc...) asparagine glycan. Position 163 (aspartate 163) interacts with Ca(2+). Residues histidine 173 and aspartate 175 each contribute to the Zn(2+) site. An interaction with TIMP2 region spans residues 177–247; the sequence is YPFDGPSGLL…GALMFPIYTY (71 aa). Ca(2+) is bound by residues aspartate 180, glycine 181, serine 183, and leucine 185. Histidine 188 contributes to the Zn(2+) binding site. Residues asparagine 195, glycine 197, and aspartate 199 each coordinate Ca(2+). Histidine 201 contributes to the Zn(2+) binding site. Ca(2+) is bound by residues aspartate 203, aspartate 204, and glutamate 206. Histidine 223 lines the Zn(2+) pocket. Glutamate 224 is a catalytic residue. 3 residues coordinate Zn(2+): histidine 227, histidine 233, and methionine 241. Positions 269–472 are interaction with collagen; it reads PGDEDPNPKH…VMPTNSLLWC (204 aa). 4 Hemopexin repeats span residues 282-331, 332-378, 380-428, and 429-472; these read PDKC…WPEL, PNRI…GFPK, VKKI…FPGI, and GDKV…LLWC. Cysteine 285 and cysteine 472 are disulfide-bonded. Residues aspartate 292, isoleucine 294, aspartate 336, and alanine 338 each coordinate Ca(2+). Position 367 is a phosphotyrosine; by PKDCC (tyrosine 367). Ca(2+) is bound by residues serine 384, alanine 386, aspartate 433, and valine 435.

It belongs to the peptidase M10A family. It depends on Ca(2+) as a cofactor. Zn(2+) is required as a cofactor. The proenzyme is activated by removal of the propeptide; this cleavage can be effected by other matrix metalloproteinases, such as MMP2, MMP3 and MMP14 and may involve several cleavage steps. Cleavage can also be autocatalytic, after partial maturation by another protease or after treatment with 4-aminophenylmercuric acetate (APMA) (in vitro). In terms of processing, N-glycosylated. Post-translationally, tyrosine phosphorylated by PKDCC/VLK. Seems to be specific to breast carcinomas.

It localises to the secreted. The protein localises to the extracellular space. The protein resides in the extracellular matrix. Its function is as follows. Plays a role in the degradation of extracellular matrix proteins including fibrillar collagen, fibronectin, TNC and ACAN. Cleaves triple helical collagens, including type I, type II and type III collagen, but has the highest activity with soluble type II collagen. Can also degrade collagen type IV, type XIV and type X. May also function by activating or degrading key regulatory proteins, such as TGFB1 and CCN2. Plays a role in wound healing, tissue remodeling, cartilage degradation, bone development, bone mineralization and ossification. Required for normal embryonic bone development and ossification. Plays a role in the healing of bone fractures via endochondral ossification. Plays a role in wound healing, probably by a mechanism that involves proteolytic activation of TGFB1 and degradation of CCN2. Plays a role in keratinocyte migration during wound healing. May play a role in cell migration and in tumor cell invasion. This is Collagenase 3 (MMP13) from Equus caballus (Horse).